The chain runs to 194 residues: Crossover junction endodeoxyribonuclease RuvC (194 aa).

Active-site residues include Asp8, Glu72, and Asp144. Mg(2+) contacts are provided by Asp8, Glu72, and Asp144.

The protein belongs to the RuvC family. As to quaternary structure, homodimer which binds Holliday junction (HJ) DNA. The HJ becomes 2-fold symmetrical on binding to RuvC with unstacked arms; it has a different conformation from HJ DNA in complex with RuvA. In the full resolvosome a probable DNA-RuvA(4)-RuvB(12)-RuvC(2) complex forms which resolves the HJ. Mg(2+) serves as cofactor.

The protein resides in the cytoplasm. The enzyme catalyses Endonucleolytic cleavage at a junction such as a reciprocal single-stranded crossover between two homologous DNA duplexes (Holliday junction).. Functionally, the RuvA-RuvB-RuvC complex processes Holliday junction (HJ) DNA during genetic recombination and DNA repair. Endonuclease that resolves HJ intermediates. Cleaves cruciform DNA by making single-stranded nicks across the HJ at symmetrical positions within the homologous arms, yielding a 5'-phosphate and a 3'-hydroxyl group; requires a central core of homology in the junction. The consensus cleavage sequence is 5'-(A/T)TT(C/G)-3'. Cleavage occurs on the 3'-side of the TT dinucleotide at the point of strand exchange. HJ branch migration catalyzed by RuvA-RuvB allows RuvC to scan DNA until it finds its consensus sequence, where it cleaves and resolves the cruciform DNA. This is Crossover junction endodeoxyribonuclease RuvC from Psychrobacter arcticus (strain DSM 17307 / VKM B-2377 / 273-4).